Here is a 116-residue protein sequence, read N- to C-terminus: Heme-degrading monooxygenase (116 aa).

The ABM domain occupies 2–92 (VIVTNTSKIT…EYILENKISF (91 aa)). A Fe cation-binding site is contributed by Asn6. His76 is a binding site for heme.

Belongs to the antibiotic biosynthesis monooxygenase family. Heme-degrading monooxygenase IsdG subfamily. Homodimer.

The protein localises to the cytoplasm. The enzyme catalyses heme b + 3 reduced [NADPH--hemoprotein reductase] + 3 O2 = biliverdin IXalpha + CO + Fe(2+) + 3 oxidized [NADPH--hemoprotein reductase] + 3 H2O + H(+). Allows bacterial pathogens to use the host heme as an iron source. Catalyzes the oxidative degradation of the heme macrocyclic porphyrin ring to the biliverdin in the presence of a suitable electron donor such as ascorbate or NADPH--cytochrome P450 reductase, with subsequent release of free iron. The protein is Heme-degrading monooxygenase of Halalkalibacterium halodurans (strain ATCC BAA-125 / DSM 18197 / FERM 7344 / JCM 9153 / C-125) (Bacillus halodurans).